The following is a 240-amino-acid chain: Serine protease SplB (240 aa).

A signal peptide spans methionine 1–alanine 36. Active-site charge relay system residues include histidine 75, aspartate 113, and serine 193.

It belongs to the peptidase S1B family.

It localises to the secreted. In terms of biological role, serine protease that cleaves specifically after the sequence Trp-Glu-Leu-Gln. In Staphylococcus aureus (strain USA300), this protein is Serine protease SplB (splB).